Here is a 448-residue protein sequence, read N- to C-terminus: Putative F-box/LRR-repeat protein At3g44810 (448 aa).

The region spanning 6–54 is the F-box domain; that stretch reads TASLNCLPDELLVHVLSSLETKQAASTSVLSKRWRTLFAVRRNLDFDDS. 6 LRR repeats span residues 117–141, 143–165, 190–213, 228–251, 290–313, and 421–443; these read VSEL…VFRS, TLVK…TCLP, CPAL…VSSK, FDWF…TYAR, VRNV…CKGG, and IVDS…SSRL.

The sequence is that of Putative F-box/LRR-repeat protein At3g44810 from Arabidopsis thaliana (Mouse-ear cress).